Consider the following 510-residue polypeptide: Flavonoid 3',5'-hydroxylase (510 aa).

Cys-447 is a heme binding site.

Belongs to the cytochrome P450 family. Heme is required as a cofactor.

It carries out the reaction a 3',5'-unsubstituted flavanone + 2 reduced [NADPH--hemoprotein reductase] + 2 O2 = a 3',5'-dihydroxyflavanone + 2 oxidized [NADPH--hemoprotein reductase] + 2 H2O + 2 H(+). It participates in pigment biosynthesis; anthocyanin biosynthesis. In terms of biological role, catalyzes the 3'5'-hydroxylation of naringenin and eriodictyol to form 5,7,3,'4',5'-pentahydroxyflavanone and 3',5'-hydroxylation of dihydrokaempferol and dihydroquercetin to form dihydromyricetin. The protein is Flavonoid 3',5'-hydroxylase (CYP75A5) of Eustoma exaltatum subsp. russellianum (Bluebells).